A 500-amino-acid polypeptide reads, in one-letter code: Gamma-glutamylanilide synthase (500 aa).

In terms of domain architecture, GS beta-grasp spans 32 to 136 (LGLEMIRLSW…MLADLHWKSG (105 aa)). A GS catalytic domain is found at 143–500 (PRGIMKKAVK…WEQKEYFNLL (358 aa)).

Belongs to the glutamine synthetase family. As to quaternary structure, homohexamer.

The enzyme catalyses aniline + L-glutamate + ATP = N(5)-phenyl-L-glutamine + ADP + phosphate. Involved in the initial oxidation of aniline to catechol by the release of its amino group. Catalyzes the ATP-dependent ligation of L-glutamate to aniline to yield gamma-glutamylanilide (gamma-GA). AtdA1 has a broad substrate range and is able to convert the following anilines, including chlorinated and methylated forms of aniline: aniline (100%), o-chloroaniline (92%), m-chloroaniline (69%), p-chloroaniline (92%), o-methylaniline (40%), m-methylaniline (27%) and p-methylaniline (45%). This Acinetobacter sp protein is Gamma-glutamylanilide synthase.